Reading from the N-terminus, the 465-residue chain is VGFKAGVKDYKLTYYTPDYETKDTDILAAFRVTPQPGVPPEEAGAAVAAESSTGTWTTVWTDGLTSLDRYKGRCYHIEPVAGEENQFIAYVAYPLDLFEEGSVTNMFTSIVGNVFGFKALRALRLEDLRIPPAYVKTFQGPPHGIQVERDKLNKYGRPLLGCTIKPKLGLSAKNYGRAVYECLRGGLDFTKDDENVNSQPFMRWRDRFLFCAEALYKAQAETGEIKGHYLNATAGTCEEMIKRAVFARELGVPIVMHDYLTGGFTANTSLAHYCRDNGLLLHIHRAMHAVIDRQKNHGIHFRVLAKALRMSGGDHIHSGTVVGKLEGEREITLGFVDLLRDDFIEKDRSRGIYFTQDWVSLPGVLPVASGGIHVWHMPALTEIFGDDSVLQFGGGTLGHPWGNAPGAVANRVALEACVQARNEGRDLAREGNEIIREASKWSPELAAACEVWKEIKFEFEAMDTL.

N6,N6,N6-trimethyllysine is present on lysine 4. The substrate site is built by asparagine 113 and threonine 163. The active-site Proton acceptor is the lysine 165. Lysine 167 provides a ligand contact to substrate. Positions 191, 193, and 194 each coordinate Mg(2+). Residue lysine 191 is modified to N6-carboxylysine. Histidine 284 serves as the catalytic Proton acceptor. Arginine 285, histidine 317, and serine 369 together coordinate substrate.

It belongs to the RuBisCO large chain family. Type I subfamily. Heterohexadecamer of 8 large chains and 8 small chains; disulfide-linked. The disulfide link is formed within the large subunit homodimers. Mg(2+) serves as cofactor. The disulfide bond which can form in the large chain dimeric partners within the hexadecamer appears to be associated with oxidative stress and protein turnover.

It localises to the plastid. The protein localises to the chloroplast. The enzyme catalyses 2 (2R)-3-phosphoglycerate + 2 H(+) = D-ribulose 1,5-bisphosphate + CO2 + H2O. The catalysed reaction is D-ribulose 1,5-bisphosphate + O2 = 2-phosphoglycolate + (2R)-3-phosphoglycerate + 2 H(+). Functionally, ruBisCO catalyzes two reactions: the carboxylation of D-ribulose 1,5-bisphosphate, the primary event in carbon dioxide fixation, as well as the oxidative fragmentation of the pentose substrate in the photorespiration process. Both reactions occur simultaneously and in competition at the same active site. This chain is Ribulose bisphosphate carboxylase large chain, found in Platytheca verticillata.